The chain runs to 728 residues: Ribosome biogenesis protein bop1-B (728 aa).

A disordered region spans residues 1-114 (MKRGSKRESG…ENDSSDEEDI (114 aa)). A compositionally biased stretch (acidic residues) spans 50-67 (SGTDSSDDEEDHSSEEVQ). WD repeat units follow at residues 393–432 (GHKD…CMKS), 434–474 (VLEG…RLLC), 514–556 (KHQK…SQNP), 559–597 (KNKG…LTKK), 600–639 (TNCK…KPYK), 643–682 (HHKK…DLLQ), and 698–728 (HRDL…RLFT).

It belongs to the WD repeat BOP1/ERB1 family. As to quaternary structure, component of the PeBoW complex, composed of bop1, pes1 and wdr12. The complex is held together by bop1, which interacts with pes1 via its N-terminal domain and with wdr12 via a high-affinity interaction between the seven-bladed beta-propeller domains of the 2 proteins. The PeBoW complex associates with the 66S pre-ribosome.

The protein resides in the nucleus. The protein localises to the nucleolus. It localises to the nucleoplasm. In terms of biological role, component of the PeBoW complex, which is required for maturation of 28S and 5.8S ribosomal RNAs and formation of the 60S ribosome. In Xenopus laevis (African clawed frog), this protein is Ribosome biogenesis protein bop1-B (bop1-b).